A 1308-amino-acid chain; its full sequence is Spermatogenesis-associated protein 31F1B (1308 aa).

The helical transmembrane segment at 7-27 (FLWDTECPLYVYFCFFIIVLI) threads the bilayer. Disordered regions lie at residues 464–488 (SPPIPLPEAAPPPSSTSPNESLDEP), 627–648 (SQPGKPEAYGSGDTFLPTAGKG), 844–863 (HGAQGHGRTEKVPPERQPLL), 902–927 (PTATDLESESVQEPLGSPRESTLLQG), 1005–1026 (FSTESQSPGKSKSGYVPTVAGK), 1084–1190 (GACP…AGLK), and 1204–1254 (MKSK…PKAQ). Residues 465–478 (PPIPLPEAAPPPSS) show a composition bias toward pro residues. Residues 1107–1117 (METDSEQDMED) show a composition bias toward acidic residues.

Belongs to the SPATA31 family.

The protein localises to the membrane. The polypeptide is Spermatogenesis-associated protein 31F1B (Mus musculus (Mouse)).